The sequence spans 232 residues: Aliphatic sulfonates import ATP-binding protein SsuB 2 (232 aa).

The ABC transporter domain occupies 1-216 (MDIRVDRKAF…PRDRRDPLLA (216 aa)). Position 33–40 (33–40 (GPSGCGKS)) interacts with ATP.

This sequence belongs to the ABC transporter superfamily. Aliphatic sulfonates importer (TC 3.A.1.17.2) family. As to quaternary structure, the complex is composed of two ATP-binding proteins (SsuB), two transmembrane proteins (SsuC) and a solute-binding protein (SsuA).

It localises to the cell inner membrane. It catalyses the reaction ATP + H2O + aliphatic sulfonate-[sulfonate-binding protein]Side 1 = ADP + phosphate + aliphatic sulfonateSide 2 + [sulfonate-binding protein]Side 1.. Its function is as follows. Part of the ABC transporter complex SsuABC involved in aliphatic sulfonates import. Responsible for energy coupling to the transport system. The chain is Aliphatic sulfonates import ATP-binding protein SsuB 2 from Pseudomonas syringae pv. tomato (strain ATCC BAA-871 / DC3000).